We begin with the raw amino-acid sequence, 93 residues long: Neutrophil cationic peptide 1 type B (93 aa).

A signal peptide spans 1 to 19 (MRTVPLFAACLLLTLMAQA). The propeptide occupies 20–62 (EPLPRAADHSDTKMKGDREDHVAVISFWEEESTSLQDAGAGAG). Disulfide bonds link Cys65-Cys93, Cys67-Cys82, and Cys72-Cys92.

Belongs to the alpha-defensin family. Bone marrow.

It localises to the secreted. In terms of biological role, has antibiotic, anti-fungi and antiviral activity. The sequence is that of Neutrophil cationic peptide 1 type B from Cavia porcellus (Guinea pig).